The primary structure comprises 127 residues: Glycine cleavage system H protein (127 aa).

One can recognise a Lipoyl-binding domain in the interval 24–105 (AALVGITDFA…YGEGWLVKIR (82 aa)). Lys65 is modified (N6-lipoyllysine).

The protein belongs to the GcvH family. In terms of assembly, the glycine cleavage system is composed of four proteins: P, T, L and H. Requires (R)-lipoate as cofactor.

The glycine cleavage system catalyzes the degradation of glycine. The H protein shuttles the methylamine group of glycine from the P protein to the T protein. The protein is Glycine cleavage system H protein of Chlorobium limicola (strain DSM 245 / NBRC 103803 / 6330).